Here is a 316-residue protein sequence, read N- to C-terminus: Acetyl-coenzyme A carboxylase carboxyl transferase subunit alpha (316 aa).

The CoA carboxyltransferase C-terminal domain maps to 36 to 290; that stretch reads LLEERLARLR…KEALLKALEE (255 aa).

It belongs to the AccA family. Acetyl-CoA carboxylase is a heterohexamer composed of biotin carboxyl carrier protein (AccB), biotin carboxylase (AccC) and two subunits each of ACCase subunit alpha (AccA) and ACCase subunit beta (AccD).

It is found in the cytoplasm. It carries out the reaction N(6)-carboxybiotinyl-L-lysyl-[protein] + acetyl-CoA = N(6)-biotinyl-L-lysyl-[protein] + malonyl-CoA. It participates in lipid metabolism; malonyl-CoA biosynthesis; malonyl-CoA from acetyl-CoA: step 1/1. Functionally, component of the acetyl coenzyme A carboxylase (ACC) complex. First, biotin carboxylase catalyzes the carboxylation of biotin on its carrier protein (BCCP) and then the CO(2) group is transferred by the carboxyltransferase to acetyl-CoA to form malonyl-CoA. This Thermus thermophilus (strain ATCC 27634 / DSM 579 / HB8) protein is Acetyl-coenzyme A carboxylase carboxyl transferase subunit alpha.